We begin with the raw amino-acid sequence, 269 residues long: Cytochrome c oxidase subunit 3 (269 aa).

The next 7 membrane-spanning stretches (helical) occupy residues 24 to 44 (FYNS…MHGF), 46 to 66 (NMYI…TLWF), 90 to 110 (GVGL…WTFF), 132 to 152 (IDPF…GVTV), 167 to 187 (ALYG…FQGI), 207 to 227 (FSTG…SVGL), and 247 to 267 (ILYW…IYFW).

The protein belongs to the cytochrome c oxidase subunit 3 family. Component of the cytochrome c oxidase (complex IV, CIV), a multisubunit enzyme composed of a catalytic core of 3 subunits and several supernumerary subunits. The complex exists as a monomer or a dimer and forms supercomplexes (SCs) in the inner mitochondrial membrane with ubiquinol-cytochrome c oxidoreductase (cytochrome b-c1 complex, complex III, CIII).

The protein localises to the mitochondrion inner membrane. It carries out the reaction 4 Fe(II)-[cytochrome c] + O2 + 8 H(+)(in) = 4 Fe(III)-[cytochrome c] + 2 H2O + 4 H(+)(out). Its function is as follows. Component of the cytochrome c oxidase, the last enzyme in the mitochondrial electron transport chain which drives oxidative phosphorylation. The respiratory chain contains 3 multisubunit complexes succinate dehydrogenase (complex II, CII), ubiquinol-cytochrome c oxidoreductase (cytochrome b-c1 complex, complex III, CIII) and cytochrome c oxidase (complex IV, CIV), that cooperate to transfer electrons derived from NADH and succinate to molecular oxygen, creating an electrochemical gradient over the inner membrane that drives transmembrane transport and the ATP synthase. Cytochrome c oxidase is the component of the respiratory chain that catalyzes the reduction of oxygen to water. Electrons originating from reduced cytochrome c in the intermembrane space (IMS) are transferred via the dinuclear copper A center (CU(A)) of subunit 2 and heme A of subunit 1 to the active site in subunit 1, a binuclear center (BNC) formed by heme A3 and copper B (CU(B)). The BNC reduces molecular oxygen to 2 water molecules using 4 electrons from cytochrome c in the IMS and 4 protons from the mitochondrial matrix. This is Cytochrome c oxidase subunit 3 (COXIII) from Trichophyton rubrum (Athlete's foot fungus).